Here is a 90-residue protein sequence, read N- to C-terminus: UPF0297 protein OEOE_1166 (90 aa).

Belongs to the UPF0297 family.

The sequence is that of UPF0297 protein OEOE_1166 from Oenococcus oeni (strain ATCC BAA-331 / PSU-1).